A 249-amino-acid chain; its full sequence is Deoxyribose-phosphate aldolase (249 aa).

D105 acts as the Proton donor/acceptor in catalysis. K168 functions as the Schiff-base intermediate with acetaldehyde in the catalytic mechanism. The active-site Proton donor/acceptor is the K216.

The protein belongs to the DeoC/FbaB aldolase family. DeoC type 1 subfamily.

It is found in the cytoplasm. It carries out the reaction 2-deoxy-D-ribose 5-phosphate = D-glyceraldehyde 3-phosphate + acetaldehyde. Its pathway is carbohydrate degradation; 2-deoxy-D-ribose 1-phosphate degradation; D-glyceraldehyde 3-phosphate and acetaldehyde from 2-deoxy-alpha-D-ribose 1-phosphate: step 2/2. In terms of biological role, catalyzes a reversible aldol reaction between acetaldehyde and D-glyceraldehyde 3-phosphate to generate 2-deoxy-D-ribose 5-phosphate. This is Deoxyribose-phosphate aldolase from Corynebacterium jeikeium (strain K411).